We begin with the raw amino-acid sequence, 427 residues long: Serine--tRNA ligase (427 aa).

232–234 (TAE) is an L-serine binding site. Residue 263 to 265 (RSE) coordinates ATP. An L-serine-binding site is contributed by E286. Residue 350–353 (EISS) participates in ATP binding. S385 is a binding site for L-serine.

Belongs to the class-II aminoacyl-tRNA synthetase family. Type-1 seryl-tRNA synthetase subfamily. Homodimer. The tRNA molecule binds across the dimer.

Its subcellular location is the cytoplasm. It catalyses the reaction tRNA(Ser) + L-serine + ATP = L-seryl-tRNA(Ser) + AMP + diphosphate + H(+). It carries out the reaction tRNA(Sec) + L-serine + ATP = L-seryl-tRNA(Sec) + AMP + diphosphate + H(+). Its pathway is aminoacyl-tRNA biosynthesis; selenocysteinyl-tRNA(Sec) biosynthesis; L-seryl-tRNA(Sec) from L-serine and tRNA(Sec): step 1/1. Functionally, catalyzes the attachment of serine to tRNA(Ser). Is also able to aminoacylate tRNA(Sec) with serine, to form the misacylated tRNA L-seryl-tRNA(Sec), which will be further converted into selenocysteinyl-tRNA(Sec). The protein is Serine--tRNA ligase of Lacticaseibacillus paracasei (strain ATCC 334 / BCRC 17002 / CCUG 31169 / CIP 107868 / KCTC 3260 / NRRL B-441) (Lactobacillus paracasei).